The primary structure comprises 801 residues: Phosphatidylinositol 4-kinase beta (801 aa).

Disordered regions lie at residues 1-29, 101-121, and 250-304; these read MGDT…GGSL, EDEM…RRRQ, and RKRE…EDEP. Position 2 is an N-acetylglycine (G2). Residues 2-68 form an interaction with ACBD3 region; that stretch reads GDTAVEPAPL…VRLLHGAVAV (67 aa). The region spanning 29–242 is the PIK helical domain; the sequence is LLSVITEGVG…GTKLRKLILS (214 aa). The residue at position 258 (S258) is a Phosphoserine. The segment covering 259-268 has biased composition (polar residues); the sequence is PALNTGLSPS. T263 carries the phosphothreonine modification. 6 positions are modified to phosphoserine: S266, S275, S277, S284, S294, and S413. Over residues 278 to 294 the composition is skewed to low complexity; sequence DATASISLSSSLKRTAS. Phosphothreonine is present on T423. A Phosphoserine modification is found at S496. Phosphothreonine is present on residues T502 and T504. The PI3K/PI4K catalytic domain maps to 520 to 786; it reads EPWQEKVRRI…MVDGSMRSIT (267 aa). The G-loop stretch occupies residues 526–532; that stretch reads VRRIREG. The segment at 653 to 661 is catalytic loop; it reads QVKDRHNGN. The segment at 672-696 is activation loop; that stretch reads HIDFGFILSSSPRNLGFETSAFKLT.

This sequence belongs to the PI3/PI4-kinase family. Type III PI4K subfamily. In terms of assembly, interacts with ARF1 and ARF3 in the Golgi complex, but not with ARF4, ARF5 or ARF6. Interacts with NCS1/FREQ in a calcium-independent manner. Interacts with CALN1/CABP8 and CALN2/CABP7; in a calcium-dependent manner; this interaction competes with NCS1/FREQ binding. Interacts with ACBD3. Interacts with ARMH3, YWHAB, YWHAE, YWHAG, YWHAH, YWHAQ, YWHAZ and SFN. Interacts with GGA2 (via VHS domain); the interaction is important for PI4KB location at the Golgi apparatus membrane. Interacts with ATG9A. Requires Mg(2+) as cofactor. Mn(2+) serves as cofactor.

The protein resides in the endomembrane system. It localises to the mitochondrion outer membrane. It is found in the rough endoplasmic reticulum membrane. Its subcellular location is the golgi apparatus. The protein localises to the golgi apparatus membrane. It carries out the reaction a 1,2-diacyl-sn-glycero-3-phospho-(1D-myo-inositol) + ATP = a 1,2-diacyl-sn-glycero-3-phospho-(1D-myo-inositol 4-phosphate) + ADP + H(+). Inhibited by wortmannin. Increased kinase activity upon interaction with NCS1/FREQ. Its function is as follows. Phosphorylates phosphatidylinositol (PI) in the first committed step in the production of the second messenger inositol-1,4,5,-trisphosphate (PIP). May regulate Golgi disintegration/reorganization during mitosis, possibly via its phosphorylation. Involved in Golgi-to-plasma membrane trafficking. May play an important role in the inner ear development. This chain is Phosphatidylinositol 4-kinase beta (PI4KB), found in Sorex araneus (Eurasian common shrew).